We begin with the raw amino-acid sequence, 199 residues long: Recombination protein RecR (199 aa).

The C4-type zinc finger occupies 57–72 (CEICGNMDTKNICHIC). The region spanning 80-175 (STIAIVETVA…KISRLASGIP (96 aa)) is the Toprim domain.

This sequence belongs to the RecR family.

May play a role in DNA repair. It seems to be involved in an RecBC-independent recombinational process of DNA repair. It may act with RecF and RecO. The chain is Recombination protein RecR from Rickettsia typhi (strain ATCC VR-144 / Wilmington).